The primary structure comprises 450 residues: Divalent metal cation transporter MntH (450 aa).

Transmembrane regions (helical) follow at residues L34–I54, A61–L81, I108–V128, I141–M161, A170–S190, G212–L232, I263–F283, P305–A325, S361–I381, Q383–L403, and V422–V442.

This sequence belongs to the NRAMP family.

The protein resides in the cell membrane. In terms of biological role, h(+)-stimulated, divalent metal cation uptake system. The polypeptide is Divalent metal cation transporter MntH (Staphylococcus aureus (strain bovine RF122 / ET3-1)).